The sequence spans 178 residues: Large ribosomal subunit protein uL6 (178 aa).

Belongs to the universal ribosomal protein uL6 family. As to quaternary structure, part of the 50S ribosomal subunit.

This protein binds to the 23S rRNA, and is important in its secondary structure. It is located near the subunit interface in the base of the L7/L12 stalk, and near the tRNA binding site of the peptidyltransferase center. In Arthrobacter sp. (strain FB24), this protein is Large ribosomal subunit protein uL6.